Here is a 245-residue protein sequence, read N- to C-terminus: Pyridoxine 5'-phosphate synthase (245 aa).

2 residues coordinate 3-amino-2-oxopropyl phosphate: N8 and R19. H44 acts as the Proton acceptor in catalysis. Residues R46 and H51 each coordinate 1-deoxy-D-xylulose 5-phosphate. The active-site Proton acceptor is the E76. T106 contacts 1-deoxy-D-xylulose 5-phosphate. The Proton donor role is filled by H198. Residues D199 and 221 to 222 (GH) contribute to the 3-amino-2-oxopropyl phosphate site.

The protein belongs to the PNP synthase family. In terms of assembly, homooctamer; tetramer of dimers.

It is found in the cytoplasm. It catalyses the reaction 3-amino-2-oxopropyl phosphate + 1-deoxy-D-xylulose 5-phosphate = pyridoxine 5'-phosphate + phosphate + 2 H2O + H(+). It participates in cofactor biosynthesis; pyridoxine 5'-phosphate biosynthesis; pyridoxine 5'-phosphate from D-erythrose 4-phosphate: step 5/5. Functionally, catalyzes the complicated ring closure reaction between the two acyclic compounds 1-deoxy-D-xylulose-5-phosphate (DXP) and 3-amino-2-oxopropyl phosphate (1-amino-acetone-3-phosphate or AAP) to form pyridoxine 5'-phosphate (PNP) and inorganic phosphate. The sequence is that of Pyridoxine 5'-phosphate synthase from Brucella anthropi (strain ATCC 49188 / DSM 6882 / CCUG 24695 / JCM 21032 / LMG 3331 / NBRC 15819 / NCTC 12168 / Alc 37) (Ochrobactrum anthropi).